The sequence spans 146 residues: 3-hydroxyacyl-[acyl-carrier-protein] dehydratase FabZ (146 aa).

His-47 is a catalytic residue.

The protein belongs to the thioester dehydratase family. FabZ subfamily.

The protein resides in the cytoplasm. The enzyme catalyses a (3R)-hydroxyacyl-[ACP] = a (2E)-enoyl-[ACP] + H2O. Involved in unsaturated fatty acids biosynthesis. Catalyzes the dehydration of short chain beta-hydroxyacyl-ACPs and long chain saturated and unsaturated beta-hydroxyacyl-ACPs. The protein is 3-hydroxyacyl-[acyl-carrier-protein] dehydratase FabZ of Methylococcus capsulatus (strain ATCC 33009 / NCIMB 11132 / Bath).